We begin with the raw amino-acid sequence, 261 residues long: Receptor expression-enhancing protein 4 (261 aa).

The next 2 membrane-spanning stretches (helical) occupy residues 1-21 and 35-55; these read MVSW…YPAY and YVRW…ETFT. Positions 177–261 are disordered; the sequence is ELHRRPIGYP…KKPAQSEPEN (85 aa). Residues 191 to 202 are compositionally biased toward basic and acidic residues; the sequence is ADSDSMDERWSD.

Belongs to the DP1 family. As to quaternary structure, interacts with microtubules. In terms of tissue distribution, during gastrulation, expressed on the dorsal side of the embryo and then in the neural plate and neural tube. At tailbud stages, expressed in the somites. Expressed in the neural tube later in development.

The protein resides in the endoplasmic reticulum membrane. Functionally, microtubule-binding protein required to ensure proper cell division and nuclear envelope reassembly by sequestering the endoplasmic reticulum away from chromosomes during mitosis. Probably acts by clearing the endoplasmic reticulum membrane from metaphase chromosomes. May play a role in the maintenance of both the nervous system and the musculature. This is Receptor expression-enhancing protein 4 (reep4) from Xenopus tropicalis (Western clawed frog).